The chain runs to 120 residues: ESAT-6-like protein EsxQ (120 aa).

It belongs to the WXG100 family. ESAT-6 subfamily.

The protein localises to the secreted. The protein is ESAT-6-like protein EsxQ of Mycobacterium bovis (strain ATCC BAA-935 / AF2122/97).